Reading from the N-terminus, the 316-residue chain is Adenine deaminase (316 aa).

Zn(2+) is bound by residues His14, His16, and His194. Residue Glu197 is the Proton donor of the active site. Asp275 is a Zn(2+) binding site. Asp276 serves as a coordination point for substrate.

The protein belongs to the metallo-dependent hydrolases superfamily. Adenosine and AMP deaminases family. Adenine deaminase type 2 subfamily. Requires Zn(2+) as cofactor.

The catalysed reaction is adenine + H2O + H(+) = hypoxanthine + NH4(+). Its function is as follows. Catalyzes the hydrolytic deamination of adenine to hypoxanthine. Plays an important role in the purine salvage pathway and in nitrogen catabolism. This is Adenine deaminase from Pseudomonas aeruginosa (strain LESB58).